The sequence spans 227 residues: Venom allergen 5.01 (227 aa).

The N-terminal stretch at 1 to 23 (MEIGGLVYLILIITIINLSFGET) is a signal peptide. 4 disulfides stabilise this stretch: C27–C39, C31–C124, C49–C117, and C193–C210. Residues 68 to 212 (LKRHNDFRQN…WYTHYLVCNY (145 aa)) form the SCP domain.

The protein belongs to the CRISP family. Venom allergen 5-like subfamily. Expressed by the venom gland.

Its subcellular location is the secreted. The sequence is that of Venom allergen 5.01 from Dolichovespula maculata (Bald-faced hornet).